The following is a 449-amino-acid chain: MKKIKVRYAPSPTGFLHIGNARTALFNYLFAKQNQGEFIIRIEDTDFSRNVEGGEASQLKNLRWLGIDWSEGPDIQGPFGPYRQSERLAIYQKYAQKLLDQDLAYKEFQEGHTTFAIRFRVPTNQTFAFDDLIRGKLTFQSQEIEDFIILKSNGYPSYNFAVVIDDHLMQISHIFRGEEHITNTPKQIMIYQAFQWHLPQFAHMTLILNENKKKLSKRDANIMQFIEQYEKLGYLPQALFNFLSLLGFSPLSQTEILSPQELINLFDVARLNKAPAMFDKTKLDYLNNQHLRKLLPEVIASFILQKKYLALTTAPTNYKEWMTKFVALFQDRMHYMQQITDFYQLFFQSTPFLSQEATHFLQTNPQTTLILKTFYNVFDVIVFEKDVIANSIKQVTTQNDFAKKTLFMALRIGTTCKMHGPSIALLLELLGKKQVLKNLSYVLEQAQKF.

Positions 10 to 20 (PSPTGFLHIGN) match the 'HIGH' region motif. Residues 214-218 (KLSKR) carry the 'KMSKS' region motif. K217 contacts ATP.

The protein belongs to the class-I aminoacyl-tRNA synthetase family. Glutamate--tRNA ligase type 1 subfamily. In terms of assembly, monomer.

Its subcellular location is the cytoplasm. The enzyme catalyses tRNA(Glu) + L-glutamate + ATP = L-glutamyl-tRNA(Glu) + AMP + diphosphate. Its function is as follows. Catalyzes the attachment of glutamate to tRNA(Glu) in a two-step reaction: glutamate is first activated by ATP to form Glu-AMP and then transferred to the acceptor end of tRNA(Glu). This is Glutamate--tRNA ligase from Onion yellows phytoplasma (strain OY-M).